A 352-amino-acid polypeptide reads, in one-letter code: B1 bradykinin receptor (352 aa).

The Extracellular segment spans residues 1–41; that stretch reads MAAQTLLELQPSNQSQLSALNTTSCDNAREAWDLLYQVLPI. Asparagine 13 and asparagine 21 each carry an N-linked (GlcNAc...) asparagine glycan. Residues 42 to 62 form a helical membrane-spanning segment; sequence FILTICAFGLLGNLFVLSVFL. The Cytoplasmic portion of the chain corresponds to 63-72; it reads LLRRRLTVAE. A helical membrane pass occupies residues 73-93; that stretch reads IYLVNLAASDLVFVLGLPFWA. Topologically, residues 94-110 are extracellular; that stretch reads QNIWNQFNWPFGDLLCR. A disulfide bridge links cysteine 109 with cysteine 188. The helical transmembrane segment at 111–131 threads the bilayer; the sequence is VVNGVIKANLFISIFLMVAIS. Over 132–153 the chain is Cytoplasmic; it reads QDRYCVLVHPMASRRRRRRRRA. The chain crosses the membrane as a helical span at residues 154–174; sequence RATCMVIWAVGALLSTPTFLL. At 175–206 the chain is on the extracellular side; it reads RSVSAVQDLNISACILLLPHQAWHVARIVELN. Asparagine 184 carries an N-linked (GlcNAc...) asparagine glycan. A helical transmembrane segment spans residues 207–227; the sequence is VLGFLLPLAAIIFFNGHILAS. Over 228–250 the chain is Cytoplasmic; the sequence is LRGQGEVSQTRIGGPKDCKTTVL. Residues 251–271 form a helical membrane-spanning segment; sequence ILTLVAAFLVCWAPYHCFAFL. The Extracellular portion of the chain corresponds to 272 to 294; the sequence is EFLFQVRAVRGCFWEDFIDLGLQ. Residues 295-315 form a helical membrane-spanning segment; the sequence is LANFFAFTNSCLNPVIYVFVG. Topologically, residues 316–326 are cytoplasmic; it reads RLFRTKVWELY. Cysteine 329 carries the S-palmitoyl cysteine lipid modification.

The protein belongs to the G-protein coupled receptor 1 family. Bradykinin receptor subfamily. BDKRB1 sub-subfamily.

The protein localises to the cell membrane. In terms of biological role, this is a receptor for bradykinin. Could be a factor in chronic pain and inflammation. This chain is B1 bradykinin receptor (BDKRB1), found in Tupaia minor (Pigmy tree shrew).